Reading from the N-terminus, the 72-residue chain is Translation initiation factor IF-1 (72 aa).

Residues 1–72 form the S1-like domain; that stretch reads MSKSDYIELE…TKGRITFRHK (72 aa).

It belongs to the IF-1 family. As to quaternary structure, component of the 30S ribosomal translation pre-initiation complex which assembles on the 30S ribosome in the order IF-2 and IF-3, IF-1 and N-formylmethionyl-tRNA(fMet); mRNA recruitment can occur at any time during PIC assembly.

The protein resides in the cytoplasm. Functionally, one of the essential components for the initiation of protein synthesis. Stabilizes the binding of IF-2 and IF-3 on the 30S subunit to which N-formylmethionyl-tRNA(fMet) subsequently binds. Helps modulate mRNA selection, yielding the 30S pre-initiation complex (PIC). Upon addition of the 50S ribosomal subunit IF-1, IF-2 and IF-3 are released leaving the mature 70S translation initiation complex. The sequence is that of Translation initiation factor IF-1 from Vesicomyosocius okutanii subsp. Calyptogena okutanii (strain HA).